Here is a 486-residue protein sequence, read N- to C-terminus: Glutamate--tRNA ligase 2 (486 aa).

The 'HIGH' region motif lies at Pro-12–Asn-22. Residues Lys-252–Arg-256 carry the 'KMSKS' region motif. Lys-255 contacts ATP.

Belongs to the class-I aminoacyl-tRNA synthetase family. Glutamate--tRNA ligase type 1 subfamily. Monomer.

Its subcellular location is the cytoplasm. The catalysed reaction is tRNA(Glu) + L-glutamate + ATP = L-glutamyl-tRNA(Glu) + AMP + diphosphate. Functionally, catalyzes the attachment of glutamate to tRNA(Glu) in a two-step reaction: glutamate is first activated by ATP to form Glu-AMP and then transferred to the acceptor end of tRNA(Glu). The protein is Glutamate--tRNA ligase 2 of Syntrophus aciditrophicus (strain SB).